The chain runs to 550 residues: MSTWWLVVVAAAAAAGLVRAEDRYHPERLAAGEASAATRSAAESEASFWVREAQEAIERREREGAGAKQAAGHAKNVVMFLGDGMSVPTLAAARTLLGQRRGQTGEEASLHFEQFPTLGLAKTYCVNAQVPDSSCTATAYLCGVKANQGTLGVTAAVPRHDCEASTDVTKRVQSIAEWALADGRDVGIVTTTRITHASPAGTFAKVANRNWENDNDVKQEGHDVNRCPDIAHQLIKMAPGNKFKVIFGGGRREFLPTTQVDEEGTRGLRTDGRNLIEEWQNDKESQKVSYKYLWNRQELLKLGSSPPDYLLGLFEGSHLQYHLEGDESTEPTLAELTDVAIRVLSRNERGFFLFVEGGRIDHAHHDNYAHLALDETIEMDRAVKVATDALKEDESLVVVTADHTHVMSFNGYSPRGTDVLGTVRSLDSNRMPFMVLSYTNGPGARIQQNGVRPDVTTDANFGALRWRTHTDVPLDSETHGGDDVTVFAWGVHHWMFSGLYEQTHVPHRMAWAACMGPGRHVCVSAATVPTAALLSLLLAAFITLRHQCFL.

The first 39 residues, 1–39 (MSTWWLVVVAAAAAAGLVRAEDRYHPERLAAGEASAATR), serve as a signal peptide directing secretion. Position 83 (aspartate 83) interacts with Mg(2+). Residue aspartate 83 coordinates Zn(2+). The Phosphoserine intermediate role is filled by serine 133. Residues histidine 196, serine 198, and glutamate 356 each coordinate Mg(2+). Aspartate 361, histidine 365, aspartate 402, histidine 403, and histidine 479 together coordinate Zn(2+). Residue serine 524 is the site of GPI-anchor amidated serine attachment. Residues 525 to 550 (AATVPTAALLSLLLAAFITLRHQCFL) constitute a propeptide, removed in mature form.

The protein belongs to the alkaline phosphatase family. Requires Mg(2+) as cofactor. It depends on Zn(2+) as a cofactor. In terms of tissue distribution, midgut.

The protein resides in the cell membrane. The catalysed reaction is a phosphate monoester + H2O = an alcohol + phosphate. The chain is Membrane-bound alkaline phosphatase (Alp-m) from Bombyx mori (Silk moth).